The primary structure comprises 189 residues: GMP synthase [glutamine-hydrolyzing] subunit A (189 aa).

The 189-residue stretch at 1-189 folds into the Glutamine amidotransferase type-1 domain; that stretch reads MIVILNNGGQ…CKKCGFEFEE (189 aa). The active-site Nucleophile is Cys-76. Catalysis depends on residues His-163 and Glu-165.

Heterodimer composed of a glutamine amidotransferase subunit (A) and a GMP-binding subunit (B).

The enzyme catalyses XMP + L-glutamine + ATP + H2O = GMP + L-glutamate + AMP + diphosphate + 2 H(+). Its pathway is purine metabolism; GMP biosynthesis; GMP from XMP (L-Gln route): step 1/1. Functionally, catalyzes the synthesis of GMP from XMP. This Methanococcus maripaludis (strain C7 / ATCC BAA-1331) protein is GMP synthase [glutamine-hydrolyzing] subunit A.